We begin with the raw amino-acid sequence, 86 residues long: MGRTTKVGSAGRFGPRYGLKIRRRVAAVEARMKQKHVCPVCGRKAVRRISTGIWQCQKCGATFAGGAYLPTTPAGKVAKRVTASKA.

4 residues coordinate Zn(2+): C38, C41, C56, and C59. The segment at 38–59 adopts a C4-type zinc-finger fold; sequence CPVCGRKAVRRISTGIWQCQKC.

The protein belongs to the eukaryotic ribosomal protein eL43 family. In terms of assembly, part of the 50S ribosomal subunit. The cofactor is Zn(2+).

This Thermococcus kodakarensis (strain ATCC BAA-918 / JCM 12380 / KOD1) (Pyrococcus kodakaraensis (strain KOD1)) protein is Large ribosomal subunit protein eL43.